Here is a 200-residue protein sequence, read N- to C-terminus: Dephospho-CoA kinase (200 aa).

One can recognise a DPCK domain in the interval 3 to 200 (VLGLTGSIGM…LSGKPAAATR (198 aa)). 11 to 16 (GMGKTT) is a binding site for ATP.

The protein belongs to the CoaE family.

It localises to the cytoplasm. It carries out the reaction 3'-dephospho-CoA + ATP = ADP + CoA + H(+). The protein operates within cofactor biosynthesis; coenzyme A biosynthesis; CoA from (R)-pantothenate: step 5/5. Catalyzes the phosphorylation of the 3'-hydroxyl group of dephosphocoenzyme A to form coenzyme A. The sequence is that of Dephospho-CoA kinase from Brucella melitensis biotype 1 (strain ATCC 23456 / CCUG 17765 / NCTC 10094 / 16M).